The sequence spans 1038 residues: DNA polymerase delta catalytic subunit (1038 aa).

Residues 1-29 form a disordered region; that stretch reads MSHSIPITSSPPPALKKLKLPNGSEEPSE. 4 residues coordinate Zn(2+): C942, C945, C958, and C961. The CysA-type zinc finger occupies 942–961; it reads CVSCRTPLKKDNLGALCPNC. [4Fe-4S] cluster-binding residues include C992, C995, C1005, and C1010. The CysB motif motif lies at 992-1010; the sequence is CQRCQGSLHQEVLCSNKDC.

Belongs to the DNA polymerase type-B family. In terms of assembly, heterodimer with subunits of 125 kDa and 50 kDa. The 125 kDa subunit contains the polymerase active site and most likely the active site for the 3'-5' exonuclease activity. The cofactor is [4Fe-4S] cluster.

It is found in the nucleus. It catalyses the reaction DNA(n) + a 2'-deoxyribonucleoside 5'-triphosphate = DNA(n+1) + diphosphate. This polymerase possesses two enzymatic activities: DNA synthesis (polymerase) and an exonucleolytic activity that degrades single-stranded DNA in the 3'- to 5'-direction. The protein is DNA polymerase delta catalytic subunit (POL3) of Candida albicans (Yeast).